Reading from the N-terminus, the 144-residue chain is Large ribosomal subunit protein uL11 (144 aa).

This sequence belongs to the universal ribosomal protein uL11 family. As to quaternary structure, part of the ribosomal stalk of the 50S ribosomal subunit. Interacts with L10 and the large rRNA to form the base of the stalk. L10 forms an elongated spine to which L12 dimers bind in a sequential fashion forming a multimeric L10(L12)X complex. Post-translationally, one or more lysine residues are methylated.

Forms part of the ribosomal stalk which helps the ribosome interact with GTP-bound translation factors. The sequence is that of Large ribosomal subunit protein uL11 from Deinococcus deserti (strain DSM 17065 / CIP 109153 / LMG 22923 / VCD115).